We begin with the raw amino-acid sequence, 404 residues long: Tryptophan synthase beta chain (404 aa).

The residue at position 98 (Lys98) is an N6-(pyridoxal phosphate)lysine.

It belongs to the TrpB family. In terms of assembly, tetramer of two alpha and two beta chains. Pyridoxal 5'-phosphate is required as a cofactor.

It carries out the reaction (1S,2R)-1-C-(indol-3-yl)glycerol 3-phosphate + L-serine = D-glyceraldehyde 3-phosphate + L-tryptophan + H2O. It functions in the pathway amino-acid biosynthesis; L-tryptophan biosynthesis; L-tryptophan from chorismate: step 5/5. Its function is as follows. The beta subunit is responsible for the synthesis of L-tryptophan from indole and L-serine. The polypeptide is Tryptophan synthase beta chain (Acidiphilium cryptum (strain JF-5)).